The chain runs to 385 residues: Deoxyguanosinetriphosphate triphosphohydrolase-like protein (385 aa).

The region spanning Arg-75–Thr-197 is the HD domain.

This sequence belongs to the dGTPase family. Type 2 subfamily.

The sequence is that of Deoxyguanosinetriphosphate triphosphohydrolase-like protein from Deinococcus geothermalis (strain DSM 11300 / CIP 105573 / AG-3a).